The primary structure comprises 462 residues: Argininosuccinate lyase (462 aa).

The protein belongs to the lyase 1 family. Argininosuccinate lyase subfamily.

The protein localises to the cytoplasm. The enzyme catalyses 2-(N(omega)-L-arginino)succinate = fumarate + L-arginine. The protein operates within amino-acid biosynthesis; L-arginine biosynthesis; L-arginine from L-ornithine and carbamoyl phosphate: step 3/3. This Gloeothece citriformis (strain PCC 7424) (Cyanothece sp. (strain PCC 7424)) protein is Argininosuccinate lyase.